The chain runs to 460 residues: Elongation factor 1-alpha-B (460 aa).

Gly-2 carries the n,N,N-trimethylglycine modification. Position 3 is an N6,N6-dimethyllysine; alternate (Lys-3). Residue Lys-3 is modified to N6-methyllysine; alternate. Positions 5 to 240 (KGHINVVVIG…DSIEPPARPT (236 aa)) constitute a tr-type G domain. The segment at 14 to 21 (GHVDSGKS) is G1. 14-21 (GHVDSGKS) contributes to the GTP binding site. Position 30 is an N6-methyllysine (Lys-30). Residues 70 to 74 (GITID) form a G2 region. Residue Lys-79 is modified to N6,N6,N6-trimethyllysine. The G3 stretch occupies residues 91-94 (DAPG). Residues 91-95 (DAPGH) and 153-156 (NKMD) each bind GTP. The G4 stretch occupies residues 153–156 (NKMD). The G5 stretch occupies residues 192-194 (SGF). At Lys-316 the chain carries N6,N6-dimethyllysine; alternate. Lys-316 bears the N6-methyllysine; alternate mark. Lys-390 is subject to N6-methyllysine.

The protein belongs to the TRAFAC class translation factor GTPase superfamily. Classic translation factor GTPase family. EF-Tu/EF-1A subfamily.

The protein localises to the cytoplasm. In terms of biological role, this protein promotes the GTP-dependent binding of aminoacyl-tRNA to the A-site of ribosomes during protein biosynthesis. The sequence is that of Elongation factor 1-alpha-B (tef102) from Schizosaccharomyces pombe (strain 972 / ATCC 24843) (Fission yeast).